A 524-amino-acid chain; its full sequence is M phase phosphoprotein 10 (524 aa).

The Nuclear localization signal 1 signature appears at 85–92 (VKRFAKNP). Disordered stretches follow at residues 100–243 (KLAL…KLGK) and 259–283 (KLKD…STHE). Residues 109–168 (DDIDEMDMDGFDSDDVDDEDKEIESNDSEGEDEEEEEEDEEEEEEEEEEEEEEKDGDNEG) show a composition bias toward acidic residues. Residues 131–165 (IESNDSEGEDEEEEEEDEEEEEEEEEEEEEEKDGD) are a coiled coil. Over residues 169-180 (IEDKFFKIKELE) the composition is skewed to basic and acidic residues. The segment covering 181–191 (EFLEEGEAEEY) has biased composition (acidic residues). The span at 196-207 (KNKKGVAQRKKQ) shows a compositional bias: basic residues. Acidic residues predominate over residues 210–238 (SDDEDEEDDDDEEEDVEFDAFAGGDDEET). Residues 257-302 (KMKLKDLSEDEEAEIENKGNEKLSTHERARLKLQSKIEQMEKANLD) are a coiled coil. A compositionally biased stretch (basic and acidic residues) spans 271–283 (IENKGNEKLSTHE). The Nuclear localization signal 2 signature appears at 373-380 (GKREAKEL). Positions 479-524 (KGDIKDESELTQEDRKRRRANKKRKFKAESANEPPKKALDTSTKNP) are disordered. Residues 480–493 (GDIKDESELTQEDR) show a composition bias toward basic and acidic residues. Over residues 494–504 (KRRRANKKRKF) the composition is skewed to basic residues. A compositionally biased stretch (basic and acidic residues) spans 505–517 (KAESANEPPKKAL).

Belongs to the MPP10 family. In terms of assembly, component of the ribosomal small subunit (SSU) processome. Interacts with THAL in the nucleus.

The protein resides in the nucleus. It localises to the nucleolus. Its function is as follows. Involved in nucleolar processing of pre-18S ribosomal RNA. In Arabidopsis thaliana (Mouse-ear cress), this protein is M phase phosphoprotein 10.